Here is a 701-residue protein sequence, read N- to C-terminus: Polyribonucleotide nucleotidyltransferase (701 aa).

Positions 487 and 493 each coordinate Mg(2+). In terms of domain architecture, KH spans 554–613 (PTMIAMKIDTDKIRDVIGKGGATIRAICEETKASIDIEDDGSIKIFGESKEAAEAARQRV). An S1 motif domain is found at 623–691 (GKIYLGKVER…NRGRIKLSIK (69 aa)).

Belongs to the polyribonucleotide nucleotidyltransferase family. In terms of assembly, component of the RNA degradosome, which is a multiprotein complex involved in RNA processing and mRNA degradation. The cofactor is Mg(2+).

It is found in the cytoplasm. The catalysed reaction is RNA(n+1) + phosphate = RNA(n) + a ribonucleoside 5'-diphosphate. Its function is as follows. Involved in mRNA degradation. Catalyzes the phosphorolysis of single-stranded polyribonucleotides processively in the 3'- to 5'-direction. The chain is Polyribonucleotide nucleotidyltransferase from Pseudomonas syringae pv. tomato (strain ATCC BAA-871 / DC3000).